We begin with the raw amino-acid sequence, 178 residues long: Adenine phosphoribosyltransferase (178 aa).

The protein belongs to the purine/pyrimidine phosphoribosyltransferase family. In terms of assembly, homodimer.

The protein resides in the cytoplasm. It carries out the reaction AMP + diphosphate = 5-phospho-alpha-D-ribose 1-diphosphate + adenine. It participates in purine metabolism; AMP biosynthesis via salvage pathway; AMP from adenine: step 1/1. In terms of biological role, catalyzes a salvage reaction resulting in the formation of AMP, that is energically less costly than de novo synthesis. This chain is Adenine phosphoribosyltransferase, found in Cereibacter sphaeroides (strain KD131 / KCTC 12085) (Rhodobacter sphaeroides).